We begin with the raw amino-acid sequence, 760 residues long: Forkhead box protein M1 (760 aa).

Disordered stretches follow at residues 1-54 and 95-167; these read MRTS…AESS and GKES…SYAG. Low complexity-rich tracts occupy residues 43 to 54 and 110 to 124; these read PAQASQEVAESS and SSGGPSSHPSQPQAH. A compositionally biased stretch (basic and acidic residues) spans 125–134; sequence SSRDSKRAEV. The segment covering 140 to 149 has biased composition (low complexity); the sequence is GPKPAAKGVP. Residues Lys-199 and Lys-323 each participate in a glycyl lysine isopeptide (Lys-Gly) (interchain with G-Cter in SUMO2) cross-link. The segment at residues 233–325 is a DNA-binding region (fork-head); the sequence is ERPPYSYMAM…LTLDQVFKPL (93 aa). Residues 323–348 form a disordered region; sequence KPLEPGSPQSPEHLESQQKRPNPELH. Ser-329 is modified (phosphoserine). The span at 334-348 shows a compositional bias: basic and acidic residues; it reads EHLESQQKRPNPELH. A Glycyl lysine isopeptide (Lys-Gly) (interchain with G-Cter in SUMO2) cross-link involves residue Lys-354. Residue Ser-374 is modified to Phosphoserine; by CHEK2. Residues Lys-420 and Lys-438 each participate in a glycyl lysine isopeptide (Lys-Gly) (interchain with G-Cter in SUMO2) cross-link. Disordered regions lie at residues 500 to 560, 577 to 635, and 660 to 709; these read SWED…PDLF, ESSE…LDFS, and PLKS…IPSL. Position 521 is a phosphoserine (Ser-521). A compositionally biased stretch (basic and acidic residues) spans 531–542; sequence VTKRREKREVSR. The segment covering 604–613 has biased composition (polar residues); the sequence is PVSSTPSKSV. At Thr-608 the chain carries Phosphothreonine; by CDK1. The residue at position 624 (Thr-624) is a Phosphothreonine. A phosphoserine; by PLK1 mark is found at Ser-727 and Ser-736.

In terms of processing, phosphorylated in M (mitotic) phase. Phosphorylation by the checkpoint kinase CHEK2 in response to DNA damage increases the FOXM1 protein stability probably stimulating the transcription of genes involved in DNA repair. Phosphorylated by CDK1 in late S and G2 phases, creating docking sites for the POLO box domains of PLK1. Subsequently, PLK1 binds and phosphorylates FOXM1, leading to activation of transcriptional activity and subsequent enhanced expression of key mitotic regulators. Phosphorylated by GSK3B leading to ubiquitination and proteasomal degradation. As to expression, expressed in fetal heart, brain, liver, lung, kidney and limb, but only in adult thymus. Appears to be expressed only in adult organs containing proliferating/cycling cells or in response to growth factors.

The protein localises to the nucleus. Transcription factor regulating the expression of cell cycle genes essential for DNA replication and mitosis. Plays a role in the control of cell proliferation. Also plays a role in DNA break repair, participating in the DNA damage checkpoint response. Promotes transcription of PHB2. This is Forkhead box protein M1 (Foxm1) from Mus musculus (Mouse).